Here is a 57-residue protein sequence, read N- to C-terminus: Large ribosomal subunit protein bL32 (57 aa).

The interval 1–20 (MAVQQRRVSKSRKGMRRSHD) is disordered. Positions 7 to 19 (RVSKSRKGMRRSH) are enriched in basic residues.

The protein belongs to the bacterial ribosomal protein bL32 family.

This is Large ribosomal subunit protein bL32 from Ureaplasma urealyticum serovar 10 (strain ATCC 33699 / Western).